Reading from the N-terminus, the 365-residue chain is D-alanine--D-alanine ligase (365 aa).

The ATP-grasp domain occupies 135–345 (KLLLKSFNIP…YESLVDNLVS (211 aa)). 168–223 (KQSLNYPVIVKPAMLGSSIGISIAYNDTQIEKCIEEAFEYDLTVVVEKFMKVREIE) lines the ATP pocket. Positions 298, 312, and 314 each coordinate Mg(2+).

It belongs to the D-alanine--D-alanine ligase family. The cofactor is Mg(2+). Mn(2+) is required as a cofactor.

It is found in the cytoplasm. It carries out the reaction 2 D-alanine + ATP = D-alanyl-D-alanine + ADP + phosphate + H(+). The protein operates within cell wall biogenesis; peptidoglycan biosynthesis. In terms of biological role, cell wall formation. This chain is D-alanine--D-alanine ligase, found in Borrelia hermsii (strain HS1 / DAH).